Consider the following 165-residue polypeptide: Neurotrophin-3 (165 aa).

An N-terminal signal peptide occupies residues 1 to 3 (IQS). A propeptide spanning residues 4–119 (TSMDQGSLTE…VLNRTSRRKR (116 aa)) is cleaved from the precursor. The N-linked (GlcNAc...) asparagine glycan is linked to asparagine 112.

The protein belongs to the NGF-beta family.

The protein resides in the secreted. In terms of biological role, seems to promote the survival of visceral and proprioceptive sensory neurons. The polypeptide is Neurotrophin-3 (NTF3) (Calabaria reinhardtii (Calabar boa)).